Reading from the N-terminus, the 101-residue chain is Urease subunit beta (101 aa).

The protein belongs to the urease beta subunit family. As to quaternary structure, heterotrimer of UreA (gamma), UreB (beta) and UreC (alpha) subunits. Three heterotrimers associate to form the active enzyme.

It is found in the cytoplasm. The enzyme catalyses urea + 2 H2O + H(+) = hydrogencarbonate + 2 NH4(+). Its pathway is nitrogen metabolism; urea degradation; CO(2) and NH(3) from urea (urease route): step 1/1. This Paraburkholderia phymatum (strain DSM 17167 / CIP 108236 / LMG 21445 / STM815) (Burkholderia phymatum) protein is Urease subunit beta.